A 391-amino-acid polypeptide reads, in one-letter code: MSLNPRDVVIVDFGRTPMGRSKGGMHRNTRAEDMSAHLISKLLERNNKVDPAEVEDVIWGCVNQTLEQGWNIARMASLLTQIPHTSAAQTVSRLCGSSMSALHTAAQAIMTNNGDVFVIGGVEHMGHVSMMHGVDPNPHMSLHAAKASGMMGLTAEMLGKMHGITREQQDAFGLRSHQLAHKATLEGKFKDEIIPMQGYDENGFLRVFDYDETIRPDTTLESLAALKPAFNPKGGTVTAGTSSQITDGASCMIVMSAQRAQDLGIQPLAVIRSMAVAGVDPAIMGYGPVPATQKALKRAGLSISDIDFFELNEAFAAQALPVLKDLKVLDKMNEKVNLHGGAIALGHPFGCSGARISGTLLNVMKQNGGTFGVSTMCIGLGQGIATVFERV.

The active-site Acyl-thioester intermediate is Cys-95. Catalysis depends on proton acceptor residues His-347 and Cys-377.

It belongs to the thiolase-like superfamily. Thiolase family. As to quaternary structure, heterotetramer of two alpha chains (FadB) and two beta chains (FadA).

The protein localises to the cytoplasm. It catalyses the reaction an acyl-CoA + acetyl-CoA = a 3-oxoacyl-CoA + CoA. Its pathway is lipid metabolism; fatty acid beta-oxidation. Its function is as follows. Catalyzes the final step of fatty acid oxidation in which acetyl-CoA is released and the CoA ester of a fatty acid two carbons shorter is formed. The protein is 3-ketoacyl-CoA thiolase of Pseudomonas syringae pv. tomato (strain ATCC BAA-871 / DC3000).